The primary structure comprises 266 residues: MTLLQAIILGIVQGLTEFLPVSSSGHLVLASYYLGWWEKLPLYVDIATNTGTFFAVLVVLRKDVWQALSGFFAGLTSSTARQQEGWRMALLVVLGSIPTAMIGLGLKPIFEELNQPLYVSFALIVTGLVLWFTPKSGLKRNAMSLSWLDATIGGIAQGCAVIPGISRSGSTISTMLWRGATSDLAPRFSFLMYLVVSFGVAILGIDEVREEGLQLAPLLGMIIASFVTGYIALLWLFSVLKKGQFKWFAPYLWVVAAITLIKVAMG.

A run of 8 helical transmembrane segments spans residues 1-21 (MTLL…FLPV), 40-60 (LPLY…LVVL), 90-110 (LLVV…KPIF), 113-133 (LNQP…LWFT), 145-165 (LSWL…IPGI), 188-208 (FSFL…IDEV), 217-237 (PLLG…LWLF), and 245-265 (FKWF…KVAM).

Belongs to the UppP family.

It localises to the cell inner membrane. It carries out the reaction di-trans,octa-cis-undecaprenyl diphosphate + H2O = di-trans,octa-cis-undecaprenyl phosphate + phosphate + H(+). In terms of biological role, catalyzes the dephosphorylation of undecaprenyl diphosphate (UPP). Confers resistance to bacitracin. The chain is Undecaprenyl-diphosphatase from Acaryochloris marina (strain MBIC 11017).